A 400-amino-acid polypeptide reads, in one-letter code: Argininosuccinate synthase (400 aa).

10–18 (AYSGGVDTS) provides a ligand contact to ATP. Residue Tyr-89 participates in L-citrulline binding. ATP is bound at residue Gly-119. L-aspartate-binding residues include Thr-121, Asn-125, and Asp-126. Position 125 (Asn-125) interacts with L-citrulline. Positions 129, 177, 186, 262, and 274 each coordinate L-citrulline.

The protein belongs to the argininosuccinate synthase family. Type 1 subfamily. As to quaternary structure, homotetramer.

It is found in the cytoplasm. It carries out the reaction L-citrulline + L-aspartate + ATP = 2-(N(omega)-L-arginino)succinate + AMP + diphosphate + H(+). It functions in the pathway amino-acid biosynthesis; L-arginine biosynthesis; L-arginine from L-ornithine and carbamoyl phosphate: step 2/3. The polypeptide is Argininosuccinate synthase (Synechococcus sp. (strain JA-2-3B'a(2-13)) (Cyanobacteria bacterium Yellowstone B-Prime)).